A 312-amino-acid polypeptide reads, in one-letter code: DNA-directed RNA polymerase subunit alpha (312 aa).

The alpha N-terminal domain (alpha-NTD) stretch occupies residues 1-226; sequence MIEFEKPIIT…EHLNLFTDLT (226 aa). Residues 242-312 form an alpha C-terminal domain (alpha-CTD) region; the sequence is NDEKLLDRTI…DLGLGLKNDK (71 aa).

The protein belongs to the RNA polymerase alpha chain family. As to quaternary structure, homodimer. The RNAP catalytic core consists of 2 alpha, 1 beta, 1 beta' and 1 omega subunit. When a sigma factor is associated with the core the holoenzyme is formed, which can initiate transcription.

The enzyme catalyses RNA(n) + a ribonucleoside 5'-triphosphate = RNA(n+1) + diphosphate. In terms of biological role, DNA-dependent RNA polymerase catalyzes the transcription of DNA into RNA using the four ribonucleoside triphosphates as substrates. This is DNA-directed RNA polymerase subunit alpha from Streptococcus thermophilus (strain CNRZ 1066).